The primary structure comprises 220 residues: RNA-free ribonuclease P (220 aa).

This sequence belongs to the HARP family.

It catalyses the reaction Endonucleolytic cleavage of RNA, removing 5'-extranucleotides from tRNA precursor.. RNA-free RNase P that catalyzes the removal of the 5'-leader sequence from pre-tRNA to produce the mature 5'-terminus. The polypeptide is RNA-free ribonuclease P (Methanothermobacter thermautotrophicus (strain ATCC 29096 / DSM 1053 / JCM 10044 / NBRC 100330 / Delta H) (Methanobacterium thermoautotrophicum)).